The sequence spans 144 residues: Large ribosomal subunit protein uL16 (144 aa).

The segment covering M1 to G19 has biased composition (basic residues). The tract at residues M1–G23 is disordered.

The protein belongs to the universal ribosomal protein uL16 family. Part of the 50S ribosomal subunit.

Its function is as follows. Binds 23S rRNA and is also seen to make contacts with the A and possibly P site tRNAs. In Staphylococcus carnosus (strain TM300), this protein is Large ribosomal subunit protein uL16.